Here is a 78-residue protein sequence, read N- to C-terminus: Conotoxin TsMEKL-P012 (78 aa).

The first 19 residues, 1–19 (MEKLTILLLLAAVLVLAQA), serve as a signal peptide directing secretion. Residues 20–38 (LIKKGGGEKRQKEKINFLS) constitute a propeptide that is removed on maturation. 3 disulfide bridges follow: Cys-52–Cys-66, Cys-59–Cys-70, and Cys-65–Cys-75.

It belongs to the conotoxin O2 superfamily. Expressed by the venom duct.

The protein resides in the secreted. The sequence is that of Conotoxin TsMEKL-P012 from Conus tessulatus (Tessellate cone).